Reading from the N-terminus, the 203-residue chain is NAD(P)H dehydrogenase (quinone) (203 aa).

Residues 3–194 form the Flavodoxin-like domain; sequence VLIVYYSMYG…AGARFQGRYV (192 aa). FMN contacts are provided by residues 9–14 and 82–84; these read SMYGHI and TRF. Tyrosine 11 lines the NAD(+) pocket. A substrate-binding site is contributed by tryptophan 102. FMN contacts are provided by residues 117–123 and histidine 138; that span reads SSATQHG.

Belongs to the WrbA family. The cofactor is FMN.

It catalyses the reaction a quinone + NADH + H(+) = a quinol + NAD(+). It carries out the reaction a quinone + NADPH + H(+) = a quinol + NADP(+). This is NAD(P)H dehydrogenase (quinone) from Geobacter sulfurreducens (strain ATCC 51573 / DSM 12127 / PCA).